Reading from the N-terminus, the 334-residue chain is UPF0104 membrane protein MTH_378 (334 aa).

8 helical membrane passes run 7-27, 33-53, 120-140, 142-162, 218-238, 247-267, 277-297, and 300-320; these read FYFF…MGPS, VYMA…GVLA, FFDL…VPVI, VIAL…YLVN, VIFI…YLVF, FSAV…SALP, MAGL…IALV, and IISF…YAGE.

The protein belongs to the UPF0104 family.

Its subcellular location is the cell membrane. This chain is UPF0104 membrane protein MTH_378, found in Methanothermobacter thermautotrophicus (strain ATCC 29096 / DSM 1053 / JCM 10044 / NBRC 100330 / Delta H) (Methanobacterium thermoautotrophicum).